The sequence spans 2393 residues: Leucine-rich repeat serine/threonine-protein kinase 1 (2393 aa).

ANK repeat units lie at residues 56 to 86 (HGRT…SLNL), 90 to 120 (RGKT…PMKS), 123 to 152 (EGHC…KESE), 197 to 226 (EDET…HLLQ), 230 to 259 (SKDT…QLVK), 264 to 293 (EGST…PSEF), 317 to 347 (ECRT…SIDG), 361 to 390 (RGRT…DVNL), 407 to 437 (IGSG…DTDN), and 439 to 464 (ALRL…FADP). LRR repeat units lie at residues 532-553 (AITR…LFQM), 555-576 (SLRS…TYYI), 580-600 (SLEI…QFLS), 604-625 (QLQQ…IWLC), and 627-648 (ALKE…ARAS). Residues 649 to 675 (RGERPRLNNSNNNFNTQSPTQESNPIV) are disordered. 3 LRR repeats span residues 718-739 (TLTT…LACT), 742-763 (RLLI…ACVP), and 765-787 (HLRT…SPLH). The disordered stretch occupies residues 797 to 844 (TSNGSMLPKRRNSPARQHRSRSKSAVRSQRSLSVSRHHALIDPQKEEE). Over residues 804 to 820 (PKRRNSPARQHRSRSKS) the composition is skewed to basic residues. The span at 821–830 (AVRSQRSLSV) shows a compositional bias: polar residues. The span at 835-844 (ALIDPQKEEE) shows a compositional bias: basic and acidic residues. 4 LRR repeats span residues 856-877 (WLKT…NAAS), 883-905 (ALNV…ARLT), 906-928 (LLSM…YGML), and 930-952 (RLWS…VNVE). One can recognise a Roc domain in the interval 969-1167 (ESKTYHHLRL…NTIYRTAWEV (199 aa)). Residues 982–989 (GSDGVGKS), 1040–1044 (DFGGQ), and 1098–1101 (TNLD) contribute to the GTP site. Positions 1233 to 1422 (FYAACTFLHD…GFWSRLVTRI (190 aa)) constitute a COR domain. Disordered regions lie at residues 1361–1382 (CPSP…TDQN) and 1596–1633 (RNGS…RTTG). Polar residues-rich tracts occupy residues 1366–1382 (GSPT…TDQN) and 1620–1633 (ITSS…RTTG). The Protein kinase domain occupies 1694–1992 (LKRSRMLGRG…LVGFCAAPEF (299 aa)). ATP is bound by residues 1700-1708 (LGRGAFGFV) and Lys-1726. Asp-1847 serves as the catalytic Proton acceptor.

It belongs to the protein kinase superfamily. TKL Ser/Thr protein kinase family. ROCO subfamily. Mg(2+) is required as a cofactor. Mn(2+) serves as cofactor. In terms of tissue distribution, expressed in cell bodies, but not in dendritic or axonal processes, of adult head neurons. Also present in non-neuronal tissues, such as the body wall musculature and the epithelial cells of the nematode vulva.

It localises to the golgi apparatus. The catalysed reaction is L-seryl-[protein] + ATP = O-phospho-L-seryl-[protein] + ADP + H(+). The enzyme catalyses L-threonyl-[protein] + ATP = O-phospho-L-threonyl-[protein] + ADP + H(+). In terms of biological role, determines polarized sorting of synaptic vesicle (SV) proteins to the axons by excluding SV proteins from the dendrite-specific transport machinery in the Golgi. Role in stress response. Appears to antagonize the effects of pink-1 both in the regulation of axon guidance and stress response. This Caenorhabditis elegans protein is Leucine-rich repeat serine/threonine-protein kinase 1 (lrk-1).